The chain runs to 337 residues: Glyceraldehyde-3-phosphate dehydrogenase (337 aa).

Residues 12–13 (RI), D34, and R79 contribute to the NAD(+) site. D-glyceraldehyde 3-phosphate contacts are provided by residues 150–152 (SCT), T181, 210–211 (TG), and R233. C151 (nucleophile) is an active-site residue. Position 315 (N315) interacts with NAD(+).

The protein belongs to the glyceraldehyde-3-phosphate dehydrogenase family. In terms of assembly, homotetramer.

The protein resides in the cytoplasm. It catalyses the reaction D-glyceraldehyde 3-phosphate + phosphate + NAD(+) = (2R)-3-phospho-glyceroyl phosphate + NADH + H(+). It functions in the pathway carbohydrate degradation; glycolysis; pyruvate from D-glyceraldehyde 3-phosphate: step 1/5. This is Glyceraldehyde-3-phosphate dehydrogenase (GPD) from Ajellomyces capsulatus (Darling's disease fungus).